Here is a 246-residue protein sequence, read N- to C-terminus: tRNA pseudouridine synthase A (246 aa).

The Nucleophile role is filled by D52. Residue Y111 coordinates substrate.

The protein belongs to the tRNA pseudouridine synthase TruA family. In terms of assembly, homodimer.

It carries out the reaction uridine(38/39/40) in tRNA = pseudouridine(38/39/40) in tRNA. Its function is as follows. Formation of pseudouridine at positions 38, 39 and 40 in the anticodon stem and loop of transfer RNAs. The polypeptide is tRNA pseudouridine synthase A (Borrelia garinii subsp. bavariensis (strain ATCC BAA-2496 / DSM 23469 / PBi) (Borreliella bavariensis)).